Reading from the N-terminus, the 2273-residue chain is Nonribosomal peptide synthetase hasD (2273 aa).

The segment at 100–446 is adenylation 1; the sequence is FHDQLQKHSS…AGLGLALGYF (347 aa). One can recognise a Carrier 1 domain in the interval 588–664; sequence ERGLGAVESV…NIAAAVVELS (77 aa). An O-(pantetheine 4'-phosphoryl)serine modification is found at Ser-625. Positions 696-1120 are condensation 1; it reads IAPMTDMQTR…AAQPDTDLSN (425 aa). The interval 1156 to 1487 is adenylation 2; it reads ENSIQAHPDI…SGVQVTPGYL (332 aa). Residues 1634–1714 form the Carrier 2 domain; the sequence is DLETDTQRVL…DLSLAIDELV (81 aa). Ser-1673 bears the O-(pantetheine 4'-phosphoryl)serine mark. Positions 1735 to 2127 are condensation 2; sequence GQLPLSYLEK…QDLEVDMEYD (393 aa). The tract at residues 2174–2200 is disordered; the sequence is PVGLTPSHEGSAELTNGTNKTDSTTGQ. The span at 2186–2200 shows a compositional bias: polar residues; sequence ELTNGTNKTDSTTGQ. The Carrier 3 domain maps to 2201–2273; it reads QELENNLTDV…LELATCAVII (73 aa). Position 2235 is an O-(pantetheine 4'-phosphoryl)serine (Ser-2235).

This sequence belongs to the NRP synthetase family. It depends on pantetheine 4'-phosphate as a cofactor.

It functions in the pathway secondary metabolite biosynthesis. Functionally, nonribosomal peptide synthetase; part of the gene cluster that mediates the biosynthesis of hexadehydro-astechrome (HAS), a tryptophan-derived iron(III)-complex that acts as a virulence factor in infected mice. Within the pathway, the NRPS condenses tryptophan and alanine to produce the Trp-Ala dipeptide. The 7-dimethylallyltryptophan synthase hasE then catalyzes the prenylation of the hasD-tethered tryptophan or the resulting tethered Trp-Ala dipeptide at the C-7 position of the indole moiety. HAS biosynthesis continues via tethered intermediates with the succesive actions of the cytochrome P450 monooxygenase hasH, the O-methyltransferase hasC, and the FAD-linked oxidoreductase hasG. The resulting O-methylated diketopiperazine is then released from hasD. Finally, three O-methylated diketopiperazine molecules assemble in a trimeric complex with Fe(III) to produce hexadehydro-astechrome. The polypeptide is Nonribosomal peptide synthetase hasD (Aspergillus fumigatus (strain CBS 144.89 / FGSC A1163 / CEA10) (Neosartorya fumigata)).